Here is a 3083-residue protein sequence, read N- to C-terminus: Laminin subunit alpha-1 (3083 aa).

An N-terminal signal peptide occupies residues M1–S24. Q25 is subject to Pyrrolidone carboxylic acid. The Laminin N-terminal domain maps to Q25 to M276. Cystine bridges form between C277–C286, C279–C297, C299–C308, C311–C331, C334–C343, and C336–C368. 4 Laminin EGF-like domains span residues C277 to E333, C334 to P403, C404 to P460, and C461 to E509. N370 is a glycosylation site (N-linked (GlcNAc...) asparagine). 10 cysteine pairs are disulfide-bonded: C371–C380, C383–C401, C404–C416, C406–C434, C436–C445, C448–C458, C461–C474, C463–C478, C480–C489, and C492–C507. One can recognise a Laminin EGF-like 5; first part domain in the interval C510–C519. The Laminin IV type A 1 domain maps to T523–H715. N672 carries an N-linked (GlcNAc...) asparagine glycan. One can recognise a Laminin EGF-like 5; second part domain in the interval C716–P748. 32 cysteine pairs are disulfide-bonded: C749/C758, C751/C764, C767/C776, C779/C795, C798/C813, C800/C823, C826/C835, C838/C853, C856/C870, C858/C877, C880/C889, C892/C906, C909/C921, C911/C928, C930/C939, C942/C955, C958/C970, C960/C976, C978/C987, C990/C1002, C1005/C1014, C1007/C1021, C1023/C1032, C1035/C1048, C1051/C1063, C1053/C1070, C1072/C1081, C1084/C1094, C1097/C1109, C1099/C1125, C1127/C1136, and C1139/C1154. Laminin EGF-like domains follow at residues C749 to P797, C798 to P855, C856 to A908, C909 to P957, C958 to P1004, C1005 to A1050, C1051 to P1096, and C1097 to P1156. A Cell attachment site motif is present at residues R1147–D1149. A Laminin EGF-like 14; first part domain is found at C1157–C1166. The 192-residue stretch at I1177–L1368 folds into the Laminin IV type A 2 domain. N1344 carries N-linked (GlcNAc...) asparagine glycosylation. One can recognise a Laminin EGF-like 14; second part domain in the interval C1369–P1409. 12 disulfide bridges follow: C1410/C1419, C1412/C1426, C1429/C1438, C1441/C1456, C1459/C1473, C1461/C1483, C1486/C1495, C1498/C1513, C1516/C1528, C1518/C1535, C1537/C1546, and C1549/C1560. 3 consecutive Laminin EGF-like domains span residues C1410 to P1458, C1459 to T1515, and C1516 to S1562. A domain II and I region spans residues D1564–I2123. A coiled-coil region spans residues A1617–K1691. N-linked (GlcNAc...) asparagine glycosylation is found at N1659, N1686, N1718, N1725, N1763, and N1811. Residues Q1723–E1809 adopt a coiled-coil conformation. Residues K1868–N1901 adopt a coiled-coil conformation. N-linked (GlcNAc...) asparagine glycans are attached at residues N1935, N2026, N2045, and N2066. Laminin G-like domains are found at residues K2124–C2304, D2312–C2488, I2493–C2679, A2721–C2893, and Q2898–C3078. C2278 and C2304 are disulfide-bonded. N-linked (GlcNAc...) asparagine glycosylation occurs at N2355. Intrachain disulfides connect C2464–C2488 and C2652–C2679. Residue N2834 is glycosylated (N-linked (GlcNAc...) asparagine). The cysteines at positions 2868 and 2893 are disulfide-linked. A glycan (N-linked (GlcNAc...) asparagine) is linked at N2923. An intrachain disulfide couples C3047 to C3078.

Laminin is a complex glycoprotein, consisting of three different polypeptide chains (alpha, beta, gamma), which are bound to each other by disulfide bonds into a cross-shaped molecule comprising one long and three short arms with globules at each end. Alpha-1 is a subunit of laminin-1 (laminin-111 or EHS laminin) and laminin-3 (laminin-121 or S-laminin). In terms of processing, tyrosine phosphorylated by PKDCC/VLK.

The protein localises to the secreted. It localises to the extracellular space. It is found in the extracellular matrix. Its subcellular location is the basement membrane. Its function is as follows. Binding to cells via a high affinity receptor, laminin is thought to mediate the attachment, migration and organization of cells into tissues during embryonic development by interacting with other extracellular matrix components. This chain is Laminin subunit alpha-1 (Lama1), found in Mus musculus (Mouse).